A 238-amino-acid chain; its full sequence is Ribonuclease PH (238 aa).

Phosphate is bound by residues R86 and 124–126 (GTR).

This sequence belongs to the RNase PH family. Homohexameric ring arranged as a trimer of dimers.

The enzyme catalyses tRNA(n+1) + phosphate = tRNA(n) + a ribonucleoside 5'-diphosphate. Its function is as follows. Phosphorolytic 3'-5' exoribonuclease that plays an important role in tRNA 3'-end maturation. Removes nucleotide residues following the 3'-CCA terminus of tRNAs; can also add nucleotides to the ends of RNA molecules by using nucleoside diphosphates as substrates, but this may not be physiologically important. Probably plays a role in initiation of 16S rRNA degradation (leading to ribosome degradation) during starvation. This is Ribonuclease PH from Vibrio vulnificus (strain CMCP6).